The chain runs to 179 residues: Inner membrane-spanning protein YciB (179 aa).

A run of 5 helical transmembrane segments spans residues 24-44 (TATG…YAME), 49-69 (AMQK…LVLH), 76-96 (WKPT…LWAL), 121-141 (VAWI…AAYF), and 151-171 (LWGY…ISPH).

This sequence belongs to the YciB family.

The protein resides in the cell inner membrane. Plays a role in cell envelope biogenesis, maintenance of cell envelope integrity and membrane homeostasis. The polypeptide is Inner membrane-spanning protein YciB (Variovorax paradoxus (strain S110)).